The chain runs to 197 residues: MPIGVPKVPYRMPGGQFTDWISIYDRLYRERIIFLGRDVDDEIANQIIAVMLYLDSEDPGKDIYLYINSPGGMVTSGLAIYDTMQHIKSDVVTICVGLAASMGSFLLAAGTKGKRLALPHSRIMIHQPSGGTRGQATDIEIEAREILRIRHQLNQIYANNTNQPLAKIEKDMDRDFFMSAQEAKEYGLIDRVIEERI.

The Nucleophile role is filled by Ser101. Residue His126 is part of the active site.

The protein belongs to the peptidase S14 family. As to quaternary structure, fourteen ClpP subunits assemble into 2 heptameric rings which stack back to back to give a disk-like structure with a central cavity, resembling the structure of eukaryotic proteasomes.

The protein resides in the cytoplasm. The catalysed reaction is Hydrolysis of proteins to small peptides in the presence of ATP and magnesium. alpha-casein is the usual test substrate. In the absence of ATP, only oligopeptides shorter than five residues are hydrolyzed (such as succinyl-Leu-Tyr-|-NHMec, and Leu-Tyr-Leu-|-Tyr-Trp, in which cleavage of the -Tyr-|-Leu- and -Tyr-|-Trp bonds also occurs).. Its function is as follows. Cleaves peptides in various proteins in a process that requires ATP hydrolysis. Has a chymotrypsin-like activity. Plays a major role in the degradation of misfolded proteins. This is ATP-dependent Clp protease proteolytic subunit 2 from Trichormus variabilis (strain ATCC 29413 / PCC 7937) (Anabaena variabilis).